Reading from the N-terminus, the 520-residue chain is Keratin, type II cytoskeletal 72 (520 aa).

A head region spans residues 1–133 (MSRQLTLYPG…DPEIQKVRAQ (133 aa)). Residues 134–169 (EREQIKALNNKFASFIDKVRFLEQQNQVLETKWELL) are coil 1A. In terms of domain architecture, IF rod spans 134–447 (EREQIKALNN…KLLESEESRM (314 aa)). The tract at residues 170-188 (QQLDLNNSKRSLEPVHESY) is linker 1. Residues 189–280 (ISNLQKQLEI…VLFEGEIAQM (92 aa)) are coil 1B. Positions 281–304 (QSHISDTSVILSMDNNRQLDLDSI) are linker 12. The tract at residues 305–443 (LAEVRAQYEE…ATYRKLLESE (139 aa)) is coil 2. The tail stretch occupies residues 444 to 520 (ESRMAGEYPN…SSGTTKKTSR (77 aa)). Positions 494–520 (KGSCGSELKDPPAKTSGSSGTTKKTSR) are disordered. A compositionally biased stretch (low complexity) spans 507-520 (KTSGSSGTTKKTSR).

It belongs to the intermediate filament family. In terms of assembly, heterotetramer of two type I and two type II keratins.

Functionally, has a role in hair formation. Specific component of keratin intermediate filaments in the inner root sheath (IRS) of the hair follicle. The chain is Keratin, type II cytoskeletal 72 (Krt72) from Mus musculus (Mouse).